The chain runs to 231 residues: Ribose-5-phosphate isomerase A (231 aa).

Substrate contacts are provided by residues 28 to 31 (TGST), 83 to 86 (DGAD), and 96 to 99 (KGGG). Residue Glu-105 is the Proton acceptor of the active site. Substrate is bound at residue Lys-123.

The protein belongs to the ribose 5-phosphate isomerase family. As to quaternary structure, homodimer.

The catalysed reaction is aldehydo-D-ribose 5-phosphate = D-ribulose 5-phosphate. The protein operates within carbohydrate degradation; pentose phosphate pathway; D-ribose 5-phosphate from D-ribulose 5-phosphate (non-oxidative stage): step 1/1. Its function is as follows. Catalyzes the reversible conversion of ribose-5-phosphate to ribulose 5-phosphate. This Rhizobium meliloti (strain 1021) (Ensifer meliloti) protein is Ribose-5-phosphate isomerase A.